The following is a 446-amino-acid chain: MDNIMSAEYYLSLYTKYNSKNLDVFRNMLQAIEPSGNYHILHAYCGIKGLDERFVEELLHRGYSPNETDDDGNYPLHIASKINNNRIVAMLLTHGADPNACDKQHKTPLYYLSGTDDEVIERINLLVQYGAKINNSVDEEGCGPLLASTDPSERVFKKIMSIGFEARIVDKFGKNHIHRHLMSDNPKASTISWMMKLGISPSKPDHDGNTPLHIVCSKTVKNVDIINLLLPSTDVNKQNKFGDSPLTLLIKTLSPAHLINKLLSTSNVITDQTVNICIFYDRDDILEIINDKGKQYDSTDFKMAVEVGSIRCIKYLLDNDIICEDAMYYAVLSEYETMVDYLLFNHFSVDSVVNGNTCMSECVRLNNPVILSKLMLHNPTSETMYLTMKAIEKDKLDKSIIIPFIAYFVLMHPDFCKNRRYFTSYKRFVTDYVHEGVSYKVFDDYF.

6 ANK repeats span residues 71–100 (DGNYPLHIASKINNNRIVAMLLTHGADPNA), 104–135 (QHKTPLYYLSGTDDEVIERINLLVQYGAKINN), 207–237 (DGNTPLHIVCSKTVKNVDIINLLLPSTDVNK), 241–271 (FGDSPLTLLIKTLSPAHLINKLLSTSNVITD), 296–325 (YDSTDFKMAVEVGSIRCIKYLLDNDIICED), and 327–351 (MYYAVLSEYETMVDYLLFNHFSVDS).

Belongs to the orthopoxvirus OPG037 protein family. In terms of assembly, may interact with host caspase-9-Apaf-1 complex.

The protein resides in the host cytoplasm. Functionally, inhibits host apoptosis. Acts by associating with host apoptosome. The protein is Inhibitor of Apoptosis OPG037 (OPG037) of Variola virus (isolate Human/India/Ind3/1967) (VARV).